A 189-amino-acid polypeptide reads, in one-letter code: UPF0398 protein BH1768 (189 aa).

The protein belongs to the UPF0398 family.

This is UPF0398 protein BH1768 from Halalkalibacterium halodurans (strain ATCC BAA-125 / DSM 18197 / FERM 7344 / JCM 9153 / C-125) (Bacillus halodurans).